The primary structure comprises 173 residues: Large ribosomal subunit protein uL10 (173 aa).

It belongs to the universal ribosomal protein uL10 family. In terms of assembly, part of the ribosomal stalk of the 50S ribosomal subunit. The N-terminus interacts with L11 and the large rRNA to form the base of the stalk. The C-terminus forms an elongated spine to which L12 dimers bind in a sequential fashion forming a multimeric L10(L12)X complex.

Forms part of the ribosomal stalk, playing a central role in the interaction of the ribosome with GTP-bound translation factors. This chain is Large ribosomal subunit protein uL10, found in Cupriavidus metallidurans (strain ATCC 43123 / DSM 2839 / NBRC 102507 / CH34) (Ralstonia metallidurans).